Consider the following 456-residue polypeptide: GTPase Der (456 aa).

EngA-type G domains lie at 4–169 and 178–353; these read PVVA…PSKD and VQLA…DQSR. GTP is bound by residues 10–17, 57–61, 120–123, 184–191, 231–235, and 296–299; these read GRPNVGKS, DTGGL, NKCE, DTAGI, and NKWD. Positions 354 to 439 constitute a KH-like domain; the sequence is RRVTTSVVNE…PIKLFWRGKQ (86 aa).

It belongs to the TRAFAC class TrmE-Era-EngA-EngB-Septin-like GTPase superfamily. EngA (Der) GTPase family. Associates with the 50S ribosomal subunit.

Its function is as follows. GTPase that plays an essential role in the late steps of ribosome biogenesis. The chain is GTPase Der from Prochlorococcus marinus (strain NATL1A).